Reading from the N-terminus, the 118-residue chain is 5-hydroxyisourate hydrolase (118 aa).

Substrate is bound by residues H11, R51, and Y115.

Belongs to the transthyretin family. 5-hydroxyisourate hydrolase subfamily. Homotetramer.

The protein localises to the peroxisome. It catalyses the reaction 5-hydroxyisourate + H2O = 5-hydroxy-2-oxo-4-ureido-2,5-dihydro-1H-imidazole-5-carboxylate + H(+). It functions in the pathway purine metabolism; urate degradation; (S)-allantoin from urate: step 2/3. In terms of biological role, catalyzes the hydrolysis of 5-hydroxyisourate (HIU) to 2-oxo-4-hydroxy-4-carboxy-5-ureidoimidazoline (OHCU). In Mus musculus (Mouse), this protein is 5-hydroxyisourate hydrolase (Urah).